A 446-amino-acid polypeptide reads, in one-letter code: Baeyer-Villiger oxidase mdpL (446 aa).

This sequence belongs to the AflY oxidoreductase family. It depends on NADPH as a cofactor.

Its pathway is secondary metabolite biosynthesis. In terms of biological role, baeyer-Villiger oxidase; part of the gene cluster that mediates the biosynthesis of monodictyphenone, a prenyl xanthone derivative. The pathway begins with the synthesis of atrochrysone thioester by the polyketide synthase (PKS) mdpG. The atrochrysone carboxyl ACP thioesterase mdpF then breaks the thioester bond and releases the atrochrysone carboxylic acid from mdpG. The atrochrysone carboxylic acid is then converted to atrochrysone which is further transformed into emodin anthrone. The next step is performed by the anthrone oxygenase mdpH that catalyzes the oxidation of emodinanthrone to emodin. Emodin is further modified to yield monodictyphenone via several steps involving mdpB, mdpC mdpJ, mdpK and mdpL. These enzymes with xptA, xptB and xptC are also proposed to be involved in the synthesis of shamixanthone from emodin. Especially, direct reduction of emodin by the short chain dehydrogenase mdpC followed by dehydration catalyzed by the scytalone dehydratase-like protein mdpB gives loss of oxygen and formation of chrysophanol intermediate in two simple steps. The protein is Baeyer-Villiger oxidase mdpL of Emericella nidulans (strain FGSC A4 / ATCC 38163 / CBS 112.46 / NRRL 194 / M139) (Aspergillus nidulans).